The sequence spans 442 residues: Histidine--tRNA ligase (442 aa).

The protein belongs to the class-II aminoacyl-tRNA synthetase family. Homodimer.

The protein localises to the cytoplasm. It catalyses the reaction tRNA(His) + L-histidine + ATP = L-histidyl-tRNA(His) + AMP + diphosphate + H(+). This Treponema pallidum (strain Nichols) protein is Histidine--tRNA ligase (hisS).